A 184-amino-acid chain; its full sequence is UPF0149 protein PSEEN5316 (184 aa).

The protein belongs to the UPF0149 family.

The protein is UPF0149 protein PSEEN5316 of Pseudomonas entomophila (strain L48).